Reading from the N-terminus, the 290-residue chain is tRNA pseudouridine synthase A (290 aa).

Asp56 (nucleophile) is an active-site residue. Residue Tyr109 coordinates substrate.

This sequence belongs to the tRNA pseudouridine synthase TruA family.

It catalyses the reaction uridine(38/39/40) in tRNA = pseudouridine(38/39/40) in tRNA. In terms of biological role, formation of pseudouridine at positions 38, 39 and 40 in the anticodon stem and loop of transfer RNAs. In Methanobrevibacter smithii (strain ATCC 35061 / DSM 861 / OCM 144 / PS), this protein is tRNA pseudouridine synthase A.